The chain runs to 202 residues: Oligoribonuclease (202 aa).

One can recognise an Exonuclease domain in the interval 2 to 166; that stretch reads LVWIDCEMTG…ADIQESIEEL (165 aa). Tyrosine 123 is an active-site residue.

The protein belongs to the oligoribonuclease family.

The protein resides in the cytoplasm. Its function is as follows. 3'-to-5' exoribonuclease specific for small oligoribonucleotides. This is Oligoribonuclease from Cutibacterium acnes (strain DSM 16379 / KPA171202) (Propionibacterium acnes).